The chain runs to 493 residues: Protein LTV1 homolog (493 aa).

Disordered stretches follow at residues 42-63 (AAARQQKPKDPEPPTDPAQRQE), 97-119 (PNQARKQKVQDSEKPGPAPKLML), and 170-207 (IQAMAEGDSDDEEWDDEDGEEQSDMDFDSDDLNEDENE). Acidic residues predominate over residues 176–207 (GDSDDEEWDDEDGEEQSDMDFDSDDLNEDENE). A phosphoserine mark is found at Ser345, Ser369, Ser370, Ser424, and Ser427. A disordered region spans residues 359–387 (VIDEPRRSRRSSASTNPAPIQIDPKTGLP). A coiled-coil region spans residues 437–468 (KDETHEEKKERKRLLKDYRNERRIEKKANTEA). The segment covering 465–474 (NTEAFKEEKK) has biased composition (basic and acidic residues). The tract at residues 465–493 (NTEAFKEEKKRQTHVKINQRTNQQGASIV) is disordered. Polar residues predominate over residues 479–493 (VKINQRTNQQGASIV).

Belongs to the LTV1 family. In terms of assembly, interacts with RpS3; the interaction is RNA-independent. Associates with free 40S ribosome subunits.

The protein localises to the cytoplasm. Its function is as follows. Necessary for the biogenesis of 40S ribosome subunits by regulating pre-rRNA processing. Non-ribosomal factor required for efficient nuclear export of the ribosomal 40S subunit. Necessary for endoreplication driven by Myc. This Drosophila melanogaster (Fruit fly) protein is Protein LTV1 homolog.